Consider the following 204-residue polypeptide: Somatotropin (204 aa).

The first 17 residues, 1–17 (MDRVVLMLSVMSLGVSS), serve as a signal peptide directing secretion. Glutamine 18 is subject to Pyrrolidone carboxylic acid. Histidine 36 is a binding site for Zn(2+). A disulfide bridge connects residues cysteine 69 and cysteine 177. Glutamate 186 is a Zn(2+) binding site. Cysteine 194 and cysteine 202 are joined by a disulfide.

This sequence belongs to the somatotropin/prolactin family.

It is found in the secreted. Growth hormone plays an important role in growth control and is involved in the regulation of several anabolic processes. Implicated as an osmoregulatory substance important for seawater adaptation. This is Somatotropin (gh) from Sparus aurata (Gilthead sea bream).